The following is a 101-amino-acid chain: Small ribosomal subunit protein uS14 (101 aa).

A compositionally biased stretch (basic and acidic residues) spans 1-11; sequence MAKKSSVEKNN. The interval 1-22 is disordered; that stretch reads MAKKSSVEKNNRRQRMVKNAAA. The span at 12–22 shows a compositional bias: basic residues; it reads RRQRMVKNAAA.

Belongs to the universal ribosomal protein uS14 family. As to quaternary structure, part of the 30S ribosomal subunit. Contacts proteins S3 and S10.

Binds 16S rRNA, required for the assembly of 30S particles and may also be responsible for determining the conformation of the 16S rRNA at the A site. The chain is Small ribosomal subunit protein uS14 from Afipia carboxidovorans (strain ATCC 49405 / DSM 1227 / KCTC 32145 / OM5) (Oligotropha carboxidovorans).